A 349-amino-acid polypeptide reads, in one-letter code: Mitomycin biosynthesis 6-O-methyltransferase (349 aa).

S-adenosyl-L-methionine is bound by residues S167, G190, E213–R214, D240–F241, and K255. H259 (proton acceptor) is an active-site residue. N288 serves as a coordination point for substrate.

This sequence belongs to the class I-like SAM-binding methyltransferase superfamily. Cation-independent O-methyltransferase family. COMT subfamily. Homodimer.

The catalysed reaction is 6-demethylmitomycin A + S-adenosyl-L-methionine = mitomycin A + S-adenosyl-L-homocysteine. The enzyme catalyses 6-demethylmitomycin B + S-adenosyl-L-methionine = mitomycin B + S-adenosyl-L-homocysteine. With respect to regulation, completely inhibited by Zn(2+) and Cu(2+). Involved in the biosynthesis of the quinone methoxy group present in the mitomycin A and B, which are used as anticancer agents. In vitro, catalyzes the 6-O-methylation of both C9-beta- and C9-alpha-configured 6-hydroxymitomycins via the transfer of the S-methyl group of S-adenosyl-L-methionine (AdoMet) to the 6-demethylmitomycin A and B. It can also use hydroxyquinone as substrate. The polypeptide is Mitomycin biosynthesis 6-O-methyltransferase (Streptomyces lavendulae).